The chain runs to 420 residues: 3-oxo-tetronate kinase (420 aa).

ATP-binding positions include S258, 360 to 363 (GGET), and G403.

This sequence belongs to the four-carbon acid sugar kinase family.

The enzyme catalyses 3-dehydro-L-erythronate + ATP = 3-dehydro-4-O-phospho-L-erythronate + ADP + H(+). It catalyses the reaction 3-dehydro-D-erythronate + ATP = 3-dehydro-4-O-phospho-D-erythronate + ADP + H(+). Its function is as follows. Catalyzes the ATP-dependent phosphorylation of 3-oxo-tetronate to 3-oxo-tetronate 4-phosphate. This Salmonella typhimurium (strain LT2 / SGSC1412 / ATCC 700720) protein is 3-oxo-tetronate kinase.